A 245-amino-acid chain; its full sequence is Acetylglutamate kinase (245 aa).

Residues 41-42 (GG), arginine 63, and asparagine 156 contribute to the substrate site.

Belongs to the acetylglutamate kinase family. ArgB subfamily.

The protein localises to the cytoplasm. It carries out the reaction N-acetyl-L-glutamate + ATP = N-acetyl-L-glutamyl 5-phosphate + ADP. It participates in amino-acid biosynthesis; L-arginine biosynthesis; N(2)-acetyl-L-ornithine from L-glutamate: step 2/4. Its function is as follows. Catalyzes the ATP-dependent phosphorylation of N-acetyl-L-glutamate. The chain is Acetylglutamate kinase from Streptococcus mutans serotype c (strain ATCC 700610 / UA159).